A 144-amino-acid polypeptide reads, in one-letter code: 3-hydroxyacyl-[acyl-carrier-protein] dehydratase FabZ (144 aa).

The active site involves His48.

This sequence belongs to the thioester dehydratase family. FabZ subfamily.

Its subcellular location is the cytoplasm. It catalyses the reaction a (3R)-hydroxyacyl-[ACP] = a (2E)-enoyl-[ACP] + H2O. Functionally, involved in unsaturated fatty acids biosynthesis. Catalyzes the dehydration of short chain beta-hydroxyacyl-ACPs and long chain saturated and unsaturated beta-hydroxyacyl-ACPs. The polypeptide is 3-hydroxyacyl-[acyl-carrier-protein] dehydratase FabZ (Chloroflexus aggregans (strain MD-66 / DSM 9485)).